The sequence spans 293 residues: Lysosomal amino acid transporter 1 homolog (293 aa).

The Lumenal segment spans residues 1–37; sequence MVWRTLGASNFSTCPNGSVQWIWDVFGECAQDGWDEA. N-linked (GlcNAc...) asparagine glycans are attached at residues Asn10 and Asn16. The region spanning 34-100 is the PQ-loop 1 domain; that stretch reads WDEASVGLGL…LADQLPLQTY (67 aa). The helical transmembrane segment at 38–58 threads the bilayer; it reads SVGLGLVSILCFAASTFPQYI. The Cytoplasmic portion of the chain corresponds to 59-71; the sequence is KACKTGNMDQALS. Residues 72–92 form a helical membrane-spanning segment; the sequence is LWFLLGWIGGDSCNLIGSFLA. At 93–96 the chain is on the lumenal side; the sequence is DQLP. Residues 97–117 traverse the membrane as a helical segment; it reads LQTYTAVYYVLADLMMLTLYF. The Cytoplasmic segment spans residues 118-127; that stretch reads HYKFKKRPSP. Residues 128-148 form a helical membrane-spanning segment; that stretch reads LSAPINSVLLFILGTVCITPL. Residues 149–182 lie on the Lumenal side of the membrane; that stretch reads LSSTDPVAVPREGFRGRTLLSVEPGNKPFTKKEV. The chain crosses the membrane as a helical span at residues 183–203; that stretch reads IGFVIGSASSLLYLLSRLPQI. The region spanning 191 to 243 is the PQ-loop 2 domain; it reads SSLLYLLSRLPQIRTNFIRQSTQGISYSLFALVMLGNTLYGLSVLLKNPEVGQ. Residues 204-214 are Cytoplasmic-facing; the sequence is RTNFIRQSTQG. A helical membrane pass occupies residues 215–235; sequence ISYSLFALVMLGNTLYGLSVL. Residues 236-254 lie on the Lumenal side of the membrane; it reads LKNPEVGQSEGSYLLHHLP. A helical transmembrane segment spans residues 255-275; that stretch reads WLVGSLGVLLLDTIISIQFLV. At 276–293 the chain is on the cytoplasmic side; sequence YRSHETAAASEREPLLPS. Residues 290 to 291 carry the Di-leucine motif motif; the sequence is LL.

This sequence belongs to the laat-1 family. As to expression, ubiquitously expressed.

The protein localises to the lysosome membrane. Amino acid transporter that specifically mediates the pH-dependent export of the cationic amino acids arginine, histidine and lysine from lysosomes. This chain is Lysosomal amino acid transporter 1 homolog, found in Mus musculus (Mouse).